A 318-amino-acid polypeptide reads, in one-letter code: NADH-ubiquinone oxidoreductase chain 1 (318 aa).

Transmembrane regions (helical) follow at residues 2-22 (FMIN…FLTL), 70-90 (MFII…SPLP), 100-120 (LGVL…LWSG), 136-156 (VAQT…VLLM), 172-192 (LWLL…TLAE), 222-242 (LFFL…AILF), 253-273 (ELYT…FLWI), and 294-314 (LPLT…TASI).

It belongs to the complex I subunit 1 family. Core subunit of respiratory chain NADH dehydrogenase (Complex I) which is composed of 45 different subunits.

The protein localises to the mitochondrion inner membrane. The enzyme catalyses a ubiquinone + NADH + 5 H(+)(in) = a ubiquinol + NAD(+) + 4 H(+)(out). Its function is as follows. Core subunit of the mitochondrial membrane respiratory chain NADH dehydrogenase (Complex I) which catalyzes electron transfer from NADH through the respiratory chain, using ubiquinone as an electron acceptor. Essential for the catalytic activity and assembly of complex I. This is NADH-ubiquinone oxidoreductase chain 1 (MT-ND1) from Balaenoptera physalus (Fin whale).